A 312-amino-acid polypeptide reads, in one-letter code: MQFTSLEICAGAGGQALGLERAGFSHVALIEIEPSACQTLRLNRPDWNVIEGDVRLFQGEGYDGIDLLAGGVPCPPFSKAGKQLGKDDERDLFPEAIRLAKETDPKAIMLENVRGLLDPKFENYRNHITEQFAKLGYLGQWKLLYAADYGVSQLRPRVLFVALKNEYTNFFKWPEPNSEQPKTVGELLFDLMSENNWQGAHNWRLKAAQIAPTLVAVQKNTAVLTWDLHDPNAHGRSWVWMVQVCGIVRRLKTFTGMPRLTVRMTARIQGFPDDWQFFGKKTPMYRQIGNAFPPPVAEAVGRQIIKALKKEN.

The SAM-dependent MTase C5-type domain occupies 3-311; it reads FTSLEICAGA…RQIIKALKKE (309 aa). The active site involves C74.

The protein belongs to the class I-like SAM-binding methyltransferase superfamily. C5-methyltransferase family.

The catalysed reaction is a 2'-deoxycytidine in DNA + S-adenosyl-L-methionine = a 5-methyl-2'-deoxycytidine in DNA + S-adenosyl-L-homocysteine + H(+). In terms of biological role, a methylase, recognizes the double-stranded sequence 5'-GCCGGC-3', methylates C-2 on both strands, and protects the DNA from cleavage by the NgoMIV endonuclease. This Neisseria gonorrhoeae protein is Type II methyltransferase M.NgoMIV (ngoMIVM).